A 426-amino-acid polypeptide reads, in one-letter code: MPPKKAPAAPQSGKKTEQKKKEKIIEDKTFGLKNKKGAKQQKFIKNVIHQVKFGQQNPRLVAQAEGEKKTKKDDKKKELLELNDLFKPVVAAQKVSKGADPKSVVCAFYKQGQCTKGDKCKFSHDLSLERKCEKRSVYVDGRDEELEKDTMENWDEKKLEEVVNKKHGEAEKIKPKTQIVCKFFLEAIENNKYGWFWVCPGGGDMCMYRHALPPGFVLKKDKKKEEKDEEISLEDLIERERAGLGLNVTRITLESFLEWKKRKRQDRIVKLEEEMEKRKADFKAGKSLGISGREVFEFRPELINDDDEEADDTDYIFDKEDSDSETADDIKDIDLSRFVLKDVDETGITVASCERFSSYVISTEKDEEKLCVASGGEMENEDQSEEQQENDLENGFVDAVPVDENLFTGEDMDELEEELYTLDLEK.

Residues 1–28 form a disordered region; that stretch reads MPPKKAPAAPQSGKKTEQKKKEKIIEDK. Over residues 14-28 the composition is skewed to basic and acidic residues; the sequence is KKTEQKKKEKIIEDK. C3H1-type zinc fingers lie at residues 100 to 127 and 175 to 213; these read DPKS…HDLS and PKTQ…HALP. The stretch at 219–283 forms a coiled coil; it reads KKDKKKEEKD…EMEKRKADFK (65 aa). A required for interaction with DRG1 region spans residues 237-261; it reads IERERAGLGLNVTRITLESFLEWKK. The segment at 374–394 is disordered; that stretch reads SGGEMENEDQSEEQQENDLEN. The segment covering 378–392 has biased composition (acidic residues); the sequence is MENEDQSEEQQENDL.

The protein belongs to the ZC3H15/TMA46 family. Interacts with drg1.

The protein resides in the cytoplasm. It localises to the nucleus. Its function is as follows. Protects drg1 from proteolytic degradation. The chain is Zinc finger CCCH domain-containing protein 15 (zc3h15) from Xenopus tropicalis (Western clawed frog).